We begin with the raw amino-acid sequence, 167 residues long: ATP synthase subunit b (167 aa).

Residues 7 to 25 (SFWLTISFVIFVYLIYRPA) traverse the membrane as a helical segment.

Belongs to the ATPase B chain family. As to quaternary structure, F-type ATPases have 2 components, F(1) - the catalytic core - and F(0) - the membrane proton channel. F(1) has five subunits: alpha(3), beta(3), gamma(1), delta(1), epsilon(1). F(0) has three main subunits: a(1), b(2) and c(10-14). The alpha and beta chains form an alternating ring which encloses part of the gamma chain. F(1) is attached to F(0) by a central stalk formed by the gamma and epsilon chains, while a peripheral stalk is formed by the delta and b chains.

Its subcellular location is the cell inner membrane. F(1)F(0) ATP synthase produces ATP from ADP in the presence of a proton or sodium gradient. F-type ATPases consist of two structural domains, F(1) containing the extramembraneous catalytic core and F(0) containing the membrane proton channel, linked together by a central stalk and a peripheral stalk. During catalysis, ATP synthesis in the catalytic domain of F(1) is coupled via a rotary mechanism of the central stalk subunits to proton translocation. In terms of biological role, component of the F(0) channel, it forms part of the peripheral stalk, linking F(1) to F(0). The polypeptide is ATP synthase subunit b (Rickettsia prowazekii (strain Madrid E)).